The following is a 458-amino-acid chain: V-type ATP synthase beta chain (458 aa).

The protein belongs to the ATPase alpha/beta chains family.

Produces ATP from ADP in the presence of a proton gradient across the membrane. The V-type beta chain is a regulatory subunit. The chain is V-type ATP synthase beta chain from Enterococcus faecalis (strain ATCC 700802 / V583).